The chain runs to 316 residues: Acetaldehyde dehydrogenase (316 aa).

11–14 (SGNI) contributes to the NAD(+) binding site. The active-site Acyl-thioester intermediate is Cys131. Residues 162–170 (SAGPGTRAN) and Asn289 each bind NAD(+).

Belongs to the acetaldehyde dehydrogenase family. As to quaternary structure, interacts with MhpE.

The catalysed reaction is acetaldehyde + NAD(+) + CoA = acetyl-CoA + NADH + H(+). The protein operates within aromatic compound metabolism; 3-phenylpropanoate degradation. Functionally, catalyzes the conversion of acetaldehyde to acetyl-CoA, using NAD(+) and coenzyme A. Is the final enzyme in the meta-cleavage pathway for the degradation of aromatic compounds. The chain is Acetaldehyde dehydrogenase from Escherichia coli O81 (strain ED1a).